The primary structure comprises 606 residues: NADH-ubiquinone oxidoreductase chain 5 (606 aa).

The next 16 membrane-spanning stretches (helical) occupy residues 1–21 (MNPFASLTLTTLIILTIPIMM), 43–63 (AFTLSLVPLLMFMHTGQEMII), 87–107 (VMFIPVALFVTWSIMEFSMWY), 112–132 (PFINRFFKYLVLFLITMMILV), 137–157 (LFQLFIGWEGVGIMSFLLIGW), 171–191 (AILYNRIGDIGFVLSMAWFLT), 213–233 (LIGLLLAAAGKSAQFGLHPWL), 241–261 (TPVSALLHSSTMVVAGVFLLI), 273–293 (VQTMTLCLGAITTLFTALCAI), 301–321 (IVAFSTSSQLGLMMVTIGINQ), 324–344 (LAFLHICMHAFFKAMLFMCSG), 366–386 (MPFTTTALIIGSLALTGMPYL), 407–429 (WALLMTLIATSLTAAYSTRIIFF), 457–477 (LLIGSIFAGFIISNNIPPMTV), 482–502 (MPLYMKMTALIVTIMGFMLAL), and 582–602 (GLIKLYFLSFLITIMISMTLF).

This sequence belongs to the complex I subunit 5 family. In terms of assembly, core subunit of respiratory chain NADH dehydrogenase (Complex I) which is composed of 45 different subunits.

It localises to the mitochondrion inner membrane. The catalysed reaction is a ubiquinone + NADH + 5 H(+)(in) = a ubiquinol + NAD(+) + 4 H(+)(out). Functionally, core subunit of the mitochondrial membrane respiratory chain NADH dehydrogenase (Complex I) which catalyzes electron transfer from NADH through the respiratory chain, using ubiquinone as an electron acceptor. Essential for the catalytic activity and assembly of complex I. The polypeptide is NADH-ubiquinone oxidoreductase chain 5 (MT-ND5) (Sus scrofa (Pig)).